The sequence spans 101 residues: Small ribosomal subunit protein uS14 (101 aa).

The protein belongs to the universal ribosomal protein uS14 family. Part of the 30S ribosomal subunit. Contacts proteins S3 and S10.

Functionally, binds 16S rRNA, required for the assembly of 30S particles and may also be responsible for determining the conformation of the 16S rRNA at the A site. The protein is Small ribosomal subunit protein uS14 of Bartonella bacilliformis (strain ATCC 35685 / KC583 / Herrer 020/F12,63).